Here is a 603-residue protein sequence, read N- to C-terminus: DNA mismatch repair protein MutL (603 aa).

Over residues E336–K346 the composition is skewed to basic and acidic residues. Disordered stretches follow at residues E336–E355 and K361–R384.

The protein belongs to the DNA mismatch repair MutL/HexB family.

This protein is involved in the repair of mismatches in DNA. It is required for dam-dependent methyl-directed DNA mismatch repair. May act as a 'molecular matchmaker', a protein that promotes the formation of a stable complex between two or more DNA-binding proteins in an ATP-dependent manner without itself being part of a final effector complex. In Listeria welshimeri serovar 6b (strain ATCC 35897 / DSM 20650 / CCUG 15529 / CIP 8149 / NCTC 11857 / SLCC 5334 / V8), this protein is DNA mismatch repair protein MutL.